Reading from the N-terminus, the 253-residue chain is Phosphoribosylaminoimidazole-succinocarboxamide synthase (253 aa).

It belongs to the SAICAR synthetase family.

It catalyses the reaction 5-amino-1-(5-phospho-D-ribosyl)imidazole-4-carboxylate + L-aspartate + ATP = (2S)-2-[5-amino-1-(5-phospho-beta-D-ribosyl)imidazole-4-carboxamido]succinate + ADP + phosphate + 2 H(+). It participates in purine metabolism; IMP biosynthesis via de novo pathway; 5-amino-1-(5-phospho-D-ribosyl)imidazole-4-carboxamide from 5-amino-1-(5-phospho-D-ribosyl)imidazole-4-carboxylate: step 1/2. The protein is Phosphoribosylaminoimidazole-succinocarboxamide synthase of Dinoroseobacter shibae (strain DSM 16493 / NCIMB 14021 / DFL 12).